The primary structure comprises 545 residues: Glucose starvation modulator protein 1 (545 aa).

The segment at residues 20-48 (CGFCHEKHLQCDVGRPCQNCRKRNIASFC) is a DNA-binding region (zn(2)-C6 fungal-type). Positions 51 to 60 (KVKRRRKRKR) are enriched in basic residues. Disordered regions lie at residues 51–131 (KVKR…AMKD) and 228–270 (YISL…WQQQ). Residues 61-71 (SDASNFDKDEA) are compositionally biased toward basic and acidic residues. Residues 72–92 (ATQTLNFNTVNPGEGSSSAMT) show a composition bias toward polar residues. A compositionally biased stretch (low complexity) spans 98-110 (TGTTTATTTRTTT). The segment covering 111–125 (NFRSESKASSSTENI) has biased composition (polar residues). Low complexity predominate over residues 257–270 (QQKESQQMQLWQQQ). The region spanning 416–486 (ELENMSKLVN…DLFHEHLAFG (71 aa)) is the PAS domain.

The protein belongs to the ERT1/acuK family.

The protein resides in the nucleus. In terms of biological role, transcription factor which regulates nonfermentable carbon utilization. The polypeptide is Glucose starvation modulator protein 1 (GSM1) (Zygosaccharomyces rouxii (strain ATCC 2623 / CBS 732 / NBRC 1130 / NCYC 568 / NRRL Y-229)).